The chain runs to 156 residues: Cyanate hydratase (156 aa).

Active-site residues include Arg-96, Glu-99, and Ser-122.

Belongs to the cyanase family.

It catalyses the reaction cyanate + hydrogencarbonate + 3 H(+) = NH4(+) + 2 CO2. Functionally, catalyzes the reaction of cyanate with bicarbonate to produce ammonia and carbon dioxide. This chain is Cyanate hydratase, found in Photorhabdus laumondii subsp. laumondii (strain DSM 15139 / CIP 105565 / TT01) (Photorhabdus luminescens subsp. laumondii).